A 109-amino-acid chain; its full sequence is Nucleoid-associated protein SO_2014 (109 aa).

Belongs to the YbaB/EbfC family. Homodimer.

The protein localises to the cytoplasm. It localises to the nucleoid. Its function is as follows. Binds to DNA and alters its conformation. May be involved in regulation of gene expression, nucleoid organization and DNA protection. This chain is Nucleoid-associated protein SO_2014, found in Shewanella oneidensis (strain ATCC 700550 / JCM 31522 / CIP 106686 / LMG 19005 / NCIMB 14063 / MR-1).